We begin with the raw amino-acid sequence, 455 residues long: Putative non-structural protein (455 aa).

Residues Lys262–His276 are compositionally biased toward basic and acidic residues. A disordered region spans residues Lys262–Lys341.

The sequence is that of Putative non-structural protein from Bombyx mori (Silk moth).